We begin with the raw amino-acid sequence, 116 residues long: NADPH-dependent 7-cyano-7-deazaguanine reductase (116 aa).

Residue cysteine 31 is the Thioimide intermediate of the active site. The Proton donor role is filled by aspartate 38. Substrate is bound by residues valine 53 to leucine 55 and tyrosine 72 to glutamate 73.

Belongs to the GTP cyclohydrolase I family. QueF type 1 subfamily.

Its subcellular location is the cytoplasm. The catalysed reaction is 7-aminomethyl-7-carbaguanine + 2 NADP(+) = 7-cyano-7-deazaguanine + 2 NADPH + 3 H(+). It participates in tRNA modification; tRNA-queuosine biosynthesis. Functionally, catalyzes the NADPH-dependent reduction of 7-cyano-7-deazaguanine (preQ0) to 7-aminomethyl-7-deazaguanine (preQ1). This chain is NADPH-dependent 7-cyano-7-deazaguanine reductase, found in Chlorobium chlorochromatii (strain CaD3).